Consider the following 179-residue polypeptide: ATP-dependent protease subunit HslV (179 aa).

Residue Thr7 is part of the active site. Ala162, Cys165, and Thr168 together coordinate Na(+).

This sequence belongs to the peptidase T1B family. HslV subfamily. A double ring-shaped homohexamer of HslV is capped on each side by a ring-shaped HslU homohexamer. The assembly of the HslU/HslV complex is dependent on binding of ATP.

Its subcellular location is the cytoplasm. It catalyses the reaction ATP-dependent cleavage of peptide bonds with broad specificity.. Its activity is regulated as follows. Allosterically activated by HslU binding. Functionally, protease subunit of a proteasome-like degradation complex believed to be a general protein degrading machinery. The polypeptide is ATP-dependent protease subunit HslV (Nitrosococcus oceani (strain ATCC 19707 / BCRC 17464 / JCM 30415 / NCIMB 11848 / C-107)).